Here is a 333-residue protein sequence, read N- to C-terminus: Ketol-acid reductoisomerase (NADP(+)) (333 aa).

Residues 1–171 (MSNDTQPKIA…GGARANIIKT (171 aa)) form the KARI N-terminal Rossmann domain. NADP(+)-binding positions include 14-17 (YGSQ), Arg37, Thr42, and 72-75 (DMVQ). His97 is an active-site residue. NADP(+) is bound at residue Gly123. In terms of domain architecture, KARI C-terminal knotted spans 172-317 (TFKEETETDL…KKLRAKMVWL (146 aa)). 4 residues coordinate Mg(2+): Asp180, Glu184, Glu216, and Glu220. Residue Ser241 coordinates substrate.

It belongs to the ketol-acid reductoisomerase family. Mg(2+) serves as cofactor.

It carries out the reaction (2R)-2,3-dihydroxy-3-methylbutanoate + NADP(+) = (2S)-2-acetolactate + NADPH + H(+). The enzyme catalyses (2R,3R)-2,3-dihydroxy-3-methylpentanoate + NADP(+) = (S)-2-ethyl-2-hydroxy-3-oxobutanoate + NADPH + H(+). It participates in amino-acid biosynthesis; L-isoleucine biosynthesis; L-isoleucine from 2-oxobutanoate: step 2/4. Its pathway is amino-acid biosynthesis; L-valine biosynthesis; L-valine from pyruvate: step 2/4. In terms of biological role, involved in the biosynthesis of branched-chain amino acids (BCAA). Catalyzes an alkyl-migration followed by a ketol-acid reduction of (S)-2-acetolactate (S2AL) to yield (R)-2,3-dihydroxy-isovalerate. In the isomerase reaction, S2AL is rearranged via a Mg-dependent methyl migration to produce 3-hydroxy-3-methyl-2-ketobutyrate (HMKB). In the reductase reaction, this 2-ketoacid undergoes a metal-dependent reduction by NADPH to yield (R)-2,3-dihydroxy-isovalerate. The sequence is that of Ketol-acid reductoisomerase (NADP(+)) from Xanthomonas oryzae pv. oryzae (strain MAFF 311018).